We begin with the raw amino-acid sequence, 821 residues long: Zinc finger protein 41 (821 aa).

A disordered region spans residues 1 to 55; sequence MAANGDSPPWSPALAAEGRGSSCEVRRERTPEARIHSVKRYPDLSPGPKGRSSAD. The segment covering 24 to 35 has biased composition (basic and acidic residues); that stretch reads EVRRERTPEARI. Positions 69–140 constitute a KRAB domain; that stretch reads VSFEDVTVDF…EGEAPHQSCS (72 aa). Lys120 participates in a covalent cross-link: Glycyl lysine isopeptide (Lys-Gly) (interchain with G-Cter in SUMO2). The C2H2-type 1 zinc finger occupies 313–335; sequence YVCTECVMGFTQKSHLFEHQRIH. The C2H2-type 2; degenerate zinc-finger motif lies at 341-364; that stretch reads RECDKSNKVFPQKPQVDVHPSVYT. 10 C2H2-type zinc fingers span residues 369-391, 397-419, 425-447, 453-475, 481-503, 509-531, 537-559, 565-587, 593-615, and 621-643; these read YLCT…QKIH, YKCS…LRIH, YECS…QKTH, YECN…QRIH, YVCA…QRIH, YECS…QRIH, YICT…QKTH, YMCA…QKTH, YKCN…QKSH, and YECK…QRIH. Lys647 participates in a covalent cross-link: Glycyl lysine isopeptide (Lys-Gly) (interchain with G-Cter in SUMO2). 6 C2H2-type zinc fingers span residues 649 to 671, 677 to 699, 705 to 727, 733 to 755, 761 to 783, and 789 to 811; these read YVCP…HRIH, YECS…QKIH, NICA…QKIH, YECG…QKSH, YECS…QIIH, and YACT…QKMH.

It belongs to the krueppel C2H2-type zinc-finger protein family. As to expression, expressed in the heart, brain, placenta, lung, liver, skeletal muscle, kidney and pancreas.

The protein localises to the nucleus. Its function is as follows. May be involved in transcriptional regulation. In Homo sapiens (Human), this protein is Zinc finger protein 41 (ZNF41).